Here is a 1085-residue protein sequence, read N- to C-terminus: MPHFTVVPVDGPRRGDYDNLEGLSWVDYGERAEREDSDGQGNHRENSPFLCPLDASRGNDYYDRNLALFEEELDIRPKVSSLLGKLVSYTNLTQGAKEHEEAESGEGGRRRAAKAPSMGTLMGVYLPCLQNIFGVILFLRLTWMVGTAGVLQALLIVLICCCCTLLTAISMSAIATNGVVPAGGSYFMISRSLGPEFGGAVGLCFYLGTTFAAAMYILGAIEILLTYIAPPAAIFYPSGTHDMSSATLNNMRVYGTIFLTLMTLVVFVGVKYVNKFASLFLACVIISILSIYAGGIKSIFDPPVFPVCMLGNRTLSRDQFDICAKTVVVDNETVATRLWTFFCHSPNLTADSCDPYFLLNNVTEIPGIPGAAAGVLQENLWSAYLEKGEVVEKHGLPSTDTLGLKESLSLYVVADIATSFTVLVGIFFPSVTGIMAGSNRSGDLRDAQKSIPVGTILAIVTTSLVYFSSVILFGACIEGVVLRDKYGDGVSRNLVVGTLAWPSPWVIVVGSFFSTCGAGLQSLTGAPRLLQAIAKDNIIPFLRVFGHGKANGEPTWALLLTALIAELGILIASLDMVAPILSMFFLMCYLFVNLACAVQTLLRTPNWRPRFKYYHWTLSFLGMSLCLALMFVSSWYYALVAMLIAGMIYKYIEYQGAEKEWGDGIRGLSLSAARYALLRLEEGPPHTKNWRPQLLVLLKLDEDLHVKYPRLLTFASQLKAGKGLTIVGSVIQGSFLESYGEAQAAEQTIKNMMDIEKVKGFCQVVVASKVREGLAHLIQSCGLGGMRHNSVVLGWPYGWRQSEDPRAWKTFIDTVRCTTAAHLALLVPKNIAFYPSNHERYLDGHIDVWWIVHDGGMLMLLPFLLRQHKVWKKCRMRIFTVAQMDDNSIQMKKDLAIFLYHLRLEAEVEVVEMHNSDISAYTYERTLMMEQRSQMLRQMRLTKTERDREAQLVKDRHSALRLESLYSDEEEESVAGADKIQMTWTRDKYMAEPWDPSHAPDNFRELVHIKPDQSNVRRMHTAVKLNEVIVTRSHDARLVLLNMPGPPKNSEGDENYMEFLEVLTEGLERVLLVRGGGREVITIYS.

Over 1–119 the chain is Cytoplasmic; the sequence is MPHFTVVPVD…RRAAKAPSMG (119 aa). 4 positions are modified to phosphoserine: S24, S47, S81, and S88. A discontinuously helical transmembrane segment spans residues 120 to 141; it reads TLMGVYLPCLQNIFGVILFLRL. K(+) contacts are provided by N131 and I132. Residues 142-149 are Extracellular-facing; it reads TWMVGTAG. The helical transmembrane segment at 150 to 172 threads the bilayer; the sequence is VLQALLIVLICCCCTLLTAISMS. Residues 173 to 196 lie on the Cytoplasmic side of the membrane; it reads AIATNGVVPAGGSYFMISRSLGPE. Residues 197 to 225 traverse the membrane as a helical segment; the sequence is FGGAVGLCFYLGTTFAAAMYILGAIEILL. Y216 lines the K(+) pocket. At 226 to 248 the chain is on the extracellular side; that stretch reads TYIAPPAAIFYPSGTHDMSSATL. A run of 2 helical transmembrane segments spans residues 249-271 and 272-297; these read NNMR…VGVK and YVNK…GGIK. The Extracellular portion of the chain corresponds to 298 to 419; the sequence is SIFDPPVFPV…LYVVADIATS (122 aa). C308 and C323 are joined by a disulfide. N-linked (GlcNAc...) asparagine glycans are attached at residues N312, N331, and N347. An intrachain disulfide couples C343 to C353. A helical transmembrane segment spans residues 420–440; it reads FTVLVGIFFPSVTGIMAGSNR. The K(+) site is built by P429 and T432. Chloride-binding residues include G433, I434, and M435. Residues 441-450 lie on the Cytoplasmic side of the membrane; sequence SGDLRDAQKS. A helical transmembrane segment spans residues 451-473; it reads IPVGTILAIVTTSLVYFSSVILF. Residues 474 to 504 are Extracellular-facing; that stretch reads GACIEGVVLRDKYGDGVSRNLVVGTLAWPSP. The chain crosses the membrane as a helical span at residues 505-531; it reads WVIVVGSFFSTCGAGLQSLTGAPRLLQ. Residues 532–554 lie on the Cytoplasmic side of the membrane; that stretch reads AIAKDNIIPFLRVFGHGKANGEP. 2 helical membrane passes run 555–575 and 576–598; these read TWAL…ASLD and MVAP…ACAV. Y589 is a binding site for chloride. Residues 599–612 lie on the Cytoplasmic side of the membrane; it reads QTLLRTPNWRPRFK. 2 helical membrane-spanning segments follow: residues 613-635 and 636-651; these read YYHW…VSSW and YYAL…IYKY. Over 652 to 1085 the chain is Cytoplasmic; sequence IEYQGAEKEW…GGREVITIYS (434 aa). Residues 665–681 form a scissor helix region; that stretch reads IRGLSLSAARYALLRLE. ATP-binding residues include L697, K699, K707, Y708, and V730. Phosphoserine is present on S734. ATP-binding residues include G794, W795, and Y797. Residues S916 and S967 each carry the phosphoserine modification. Residue T983 is modified to Phosphothreonine. S1050 bears the Phosphoserine mark.

Belongs to the SLC12A transporter family. K/Cl co-transporter subfamily. In terms of assembly, homodimer; adopts a domain-swap conformation at the scissor helices connecting the transmembrane domain and C-terminal domain. Heterodimer with other K-Cl cotransporters. Phosphorylated, phosphorylation may regulate transporter activity. Detected in embryo, adult heart, erythrocytes, brain, kidney, stomach, ovary, testis and liver.

It is found in the cell membrane. It carries out the reaction K(+)(in) + chloride(in) = K(+)(out) + chloride(out). Inhibited by WNK3. In terms of biological role, mediates electroneutral potassium-chloride cotransport when activated by cell swelling. May contribute to cell volume homeostasis in single cells. May be involved in the regulation of basolateral Cl(-) exit in NaCl absorbing epithelia. The protein is Solute carrier family 12 member 4 (Slc12a4) of Mus musculus (Mouse).